Consider the following 190-residue polypeptide: Ribose 1,5-bisphosphate phosphokinase PhnN (190 aa).

A disordered region spans residues arginine 135–aspartate 159.

It belongs to the ribose 1,5-bisphosphokinase family.

It carries out the reaction alpha-D-ribose 1,5-bisphosphate + ATP = 5-phospho-alpha-D-ribose 1-diphosphate + ADP. The protein operates within metabolic intermediate biosynthesis; 5-phospho-alpha-D-ribose 1-diphosphate biosynthesis; 5-phospho-alpha-D-ribose 1-diphosphate from D-ribose 5-phosphate (route II): step 3/3. In terms of biological role, catalyzes the phosphorylation of ribose 1,5-bisphosphate to 5-phospho-D-ribosyl alpha-1-diphosphate (PRPP). The protein is Ribose 1,5-bisphosphate phosphokinase PhnN of Pseudofrankia inefficax (strain DSM 45817 / CECT 9037 / DDB 130130 / EuI1c) (Frankia inefficax).